The primary structure comprises 202 residues: Imidazoleglycerol-phosphate dehydratase (202 aa).

The protein belongs to the imidazoleglycerol-phosphate dehydratase family.

It is found in the cytoplasm. The enzyme catalyses D-erythro-1-(imidazol-4-yl)glycerol 3-phosphate = 3-(imidazol-4-yl)-2-oxopropyl phosphate + H2O. Its pathway is amino-acid biosynthesis; L-histidine biosynthesis; L-histidine from 5-phospho-alpha-D-ribose 1-diphosphate: step 6/9. This Rhizobium etli (strain CIAT 652) protein is Imidazoleglycerol-phosphate dehydratase.